The chain runs to 249 residues: Pyridoxine 5'-phosphate synthase (249 aa).

Asn7 provides a ligand contact to 3-amino-2-oxopropyl phosphate. Residue 9 to 10 (DH) coordinates 1-deoxy-D-xylulose 5-phosphate. Arg18 is a binding site for 3-amino-2-oxopropyl phosphate. Residue His43 is the Proton acceptor of the active site. 2 residues coordinate 1-deoxy-D-xylulose 5-phosphate: Arg45 and His50. The Proton acceptor role is filled by Glu70. Thr100 contacts 1-deoxy-D-xylulose 5-phosphate. Catalysis depends on His198, which acts as the Proton donor. Residues Ala199 and 220 to 221 (GH) each bind 3-amino-2-oxopropyl phosphate.

Belongs to the PNP synthase family. Homooctamer; tetramer of dimers.

The protein localises to the cytoplasm. The catalysed reaction is 3-amino-2-oxopropyl phosphate + 1-deoxy-D-xylulose 5-phosphate = pyridoxine 5'-phosphate + phosphate + 2 H2O + H(+). It participates in cofactor biosynthesis; pyridoxine 5'-phosphate biosynthesis; pyridoxine 5'-phosphate from D-erythrose 4-phosphate: step 5/5. Its function is as follows. Catalyzes the complicated ring closure reaction between the two acyclic compounds 1-deoxy-D-xylulose-5-phosphate (DXP) and 3-amino-2-oxopropyl phosphate (1-amino-acetone-3-phosphate or AAP) to form pyridoxine 5'-phosphate (PNP) and inorganic phosphate. This is Pyridoxine 5'-phosphate synthase from Azoarcus sp. (strain BH72).